Reading from the N-terminus, the 365-residue chain is MKSLRLVALFCCLLPLGMAHASRIKDISSVEGVRSNQLIGYGLVVGLPGTGEKSNAFTEQTFRTMLNNFGIKVPDNIKPKIKDVAPVAIHADLPPFAKPGQTIDVTVSAIGEAKSLRGGTLLQSFLKGLDGRVYAVAQGSLVVGGLGAEGADGSKVVINTPTVGRIANGATVEREVPNSFSQGDTITFNLNRPDFTTARRLADVVNDLVGPNTAQALDATSVKVYAPRDPGQRVSYLATIENLEVDPASEAAKIIVNSRTGTIVIGSQVRLKPAAISHGGLTVTIAENQQVSQPNPLSGGQTAVTNNSTINVQQEQGRMFKLDTGATLDDLVRAVNQVGVAPGDLMAILEALQQAGAIEGQLVIL.

Positions 1-21 (MKSLRLVALFCCLLPLGMAHA) are cleaved as a signal peptide.

Belongs to the FlgI family. In terms of assembly, the basal body constitutes a major portion of the flagellar organelle and consists of four rings (L,P,S, and M) mounted on a central rod.

It localises to the periplasm. Its subcellular location is the bacterial flagellum basal body. Assembles around the rod to form the L-ring and probably protects the motor/basal body from shearing forces during rotation. The chain is Flagellar P-ring protein from Aeromonas hydrophila subsp. hydrophila (strain ATCC 7966 / DSM 30187 / BCRC 13018 / CCUG 14551 / JCM 1027 / KCTC 2358 / NCIMB 9240 / NCTC 8049).